The chain runs to 203 residues: GTP-binding protein ypt1 (203 aa).

GTP is bound by residues 15–23 (GDSGVGKSC), 33–40 (YTESYIST), 63–67 (DTAGQ), 121–124 (NKSD), and 151–153 (SAK). The Effector region signature appears at 37–45 (YISTIGVDF). The segment at 180–203 (NNTKASVNVSPGHGVSNNSSGGCC) is disordered. Residues Cys-202 and Cys-203 are each lipidated (S-geranylgeranyl cysteine).

The protein belongs to the small GTPase superfamily. Rab family.

The protein resides in the endoplasmic reticulum membrane. The protein localises to the golgi apparatus membrane. It localises to the cytoplasm. It is found in the preautophagosomal structure membrane. With respect to regulation, rab activation is generally mediated by a guanine exchange factor (GEF), while inactivation through hydrolysis of bound GTP is catalyzed by a GTPase activating protein (GAP). Its function is as follows. The small GTPases Rab are key regulators of intracellular membrane trafficking, from the formation of transport vesicles to their fusion with membranes. Rabs cycle between an inactive GDP-bound form and an active GTP-bound form that is able to recruit to membranes different set of downstream effectors directly responsible for vesicle formation, movement, tethering and fusion. Ypt-1 regulates the trafficking of secretory vesicles from the endoplasmic reticulum (ER) to the Golgi. Plays a role in the initial events of the autophagic vacuole development which take place at specialized regions of the endoplasmic reticulum. Also involved in the recycling of membrane proteins. This chain is GTP-binding protein ypt1 (ypt-1), found in Neurospora crassa (strain ATCC 24698 / 74-OR23-1A / CBS 708.71 / DSM 1257 / FGSC 987).